The sequence spans 296 residues: Glucokinase (296 aa).

This sequence belongs to the ROK (NagC/XylR) family. Homodimer. Requires a divalent metal cation as cofactor.

It catalyses the reaction D-glucose + ATP = D-glucose 6-phosphate + ADP + H(+). Its function is as follows. Catalyzes the phosphorylation of D-glucose to D-glucose 6-phosphate using ATP as the phosphate donor. Has a broad hexose specificity, and in addition to glucose, which shows the highest catalytic efficiency, it can also phosphorylate fructose, mannose, galactose and sorbitol. Can also use CTP, GTP or UTP as phosphoryl donor. This Pyrobaculum calidifontis (strain DSM 21063 / JCM 11548 / VA1) protein is Glucokinase.